The following is a 439-amino-acid chain: RNA polymerase II-associated protein RBA50 (439 aa).

2 disordered regions span residues 1–35 and 49–79; these read MDLL…GFPE and LREK…SEAK. The span at 15–30 shows a compositional bias: polar residues; the sequence is SVESNDNGTLSTNNCG.

It belongs to the RPAP1 family.

Its subcellular location is the cytoplasm. Its function is as follows. Forms an interface between the RNA polymerase II enzyme and chaperone/scaffolding proteins, suggesting that it is required to connect RNA polymerase II to regulators of protein complex formation. The chain is RNA polymerase II-associated protein RBA50 (RBA50) from Saccharomyces cerevisiae (strain ATCC 204508 / S288c) (Baker's yeast).